We begin with the raw amino-acid sequence, 243 residues long: 3,4-dihydroxyphthalate decarboxylase (243 aa).

Residue E86 is the Proton donor/acceptor of the active site. Positions 86, 105, 107, and 173 each coordinate a divalent metal cation.

It belongs to the aldolase class II family. Requires a divalent metal cation as cofactor.

It catalyses the reaction 3,4-dihydroxyphthalate + H(+) = 3,4-dihydroxybenzoate + CO2. Its pathway is xenobiotic degradation; phthalate degradation. In terms of biological role, catalyzes the decarboxylation of 3,4-dihydroxyphthalate to protocatechuate (3,4-dihydroxybenzoate) during phthalate metabolism. The chain is 3,4-dihydroxyphthalate decarboxylase from Rhodococcus jostii (strain RHA1).